The sequence spans 194 residues: MYLEQIKGELQEAADVLAKFMADEKNIQLIQEAALLIANSFKQGGKVLSCGNGGSHCDAMHFAEELTGRYRENRPAYPAIAISDVSHLSCVSNDFGYEYVFSRYIEAVGQTGDVLFGLSTSGNSKNVLNAINIAKEKGMKVIALTGKDGGQMAGLADVEIRVPHFRYADRTQEIHIKVIHILMMLIEFEMAKTA.

The region spanning 37–194 (IANSFKQGGK…LIEFEMAKTA (158 aa)) is the SIS domain. Residue 52–54 (NGG) coordinates substrate. The Zn(2+) site is built by His61 and Glu65. Substrate is bound by residues Glu65, 93–94 (ND), 119–121 (STS), Ser124, and Gln172. 2 residues coordinate Zn(2+): Gln172 and His180.

It belongs to the SIS family. GmhA subfamily. In terms of assembly, homotetramer. Zn(2+) serves as cofactor.

It localises to the cytoplasm. It catalyses the reaction 2 D-sedoheptulose 7-phosphate = D-glycero-alpha-D-manno-heptose 7-phosphate + D-glycero-beta-D-manno-heptose 7-phosphate. It functions in the pathway carbohydrate biosynthesis; D-glycero-D-manno-heptose 7-phosphate biosynthesis; D-glycero-alpha-D-manno-heptose 7-phosphate and D-glycero-beta-D-manno-heptose 7-phosphate from sedoheptulose 7-phosphate: step 1/1. The protein operates within bacterial outer membrane biogenesis; LOS core biosynthesis. Functionally, catalyzes the isomerization of sedoheptulose 7-phosphate in D-glycero-D-manno-heptose 7-phosphate. This is Phosphoheptose isomerase from Haemophilus ducreyi (strain 35000HP / ATCC 700724).